The primary structure comprises 157 residues: Crossover junction endodeoxyribonuclease RuvC (157 aa).

Residues Asp-7, Glu-66, and Asp-139 contribute to the active site. Mg(2+)-binding residues include Asp-7, Glu-66, and Asp-139.

This sequence belongs to the RuvC family. Homodimer which binds Holliday junction (HJ) DNA. The HJ becomes 2-fold symmetrical on binding to RuvC with unstacked arms; it has a different conformation from HJ DNA in complex with RuvA. In the full resolvosome a probable DNA-RuvA(4)-RuvB(12)-RuvC(2) complex forms which resolves the HJ. Mg(2+) serves as cofactor.

The protein localises to the cytoplasm. The enzyme catalyses Endonucleolytic cleavage at a junction such as a reciprocal single-stranded crossover between two homologous DNA duplexes (Holliday junction).. Functionally, the RuvA-RuvB-RuvC complex processes Holliday junction (HJ) DNA during genetic recombination and DNA repair. Endonuclease that resolves HJ intermediates. Cleaves cruciform DNA by making single-stranded nicks across the HJ at symmetrical positions within the homologous arms, yielding a 5'-phosphate and a 3'-hydroxyl group; requires a central core of homology in the junction. The consensus cleavage sequence is 5'-(A/T)TT(C/G)-3'. Cleavage occurs on the 3'-side of the TT dinucleotide at the point of strand exchange. HJ branch migration catalyzed by RuvA-RuvB allows RuvC to scan DNA until it finds its consensus sequence, where it cleaves and resolves the cruciform DNA. The protein is Crossover junction endodeoxyribonuclease RuvC of Helicobacter pylori (strain Shi470).